The following is a 668-amino-acid chain: Nuclear pore complex protein Nup75 (668 aa).

It belongs to the nucleoporin Nup85 family. In terms of assembly, component of the nuclear pore complex (NPC). Component of the NPC Nup107-160 subcomplex.

The protein localises to the nucleus. Its subcellular location is the nuclear pore complex. It is found in the nucleus membrane. Component of the nuclear pore complex (NPC) that seems to be required for NPC assembly and maintenance. Required for nuclear import of phosphorylated Mad via importin msk. Has no role in classical nuclear localization signal (cNLS)-dependent nuclear import via importin-beta. Facilitates the interaction between Nup93 and sec13 with msk. This chain is Nuclear pore complex protein Nup75, found in Drosophila melanogaster (Fruit fly).